A 600-amino-acid chain; its full sequence is Spore coat protein SP96 (600 aa).

A DSCP-N domain is found at 21–140 (QSCSSYSGDN…DVCQCKGGQT (120 aa)). The tract at residues 139–178 (QTSGGSTTGSQTSGGSTSGGSTTGSQTSGGSTTGSQTSGS) is disordered. Low complexity predominate over residues 161 to 178 (TGSQTSGGSTTGSQTSGS). 6 Follistatin-like domains span residues 184–206 (SCSN…AVCV), 220–243 (PCDT…AKCT), 267–289 (LCDN…AKCI), 297–319 (VCRN…PICV), 331–359 (TCND…AKCC), and 394–416 (PCSV…AVCL). The segment at 420–530 (TTTTGSTSDS…ASSSSASSSS (111 aa)) is disordered.

Glycosylated; may contain fucose and GlcNAc-alpha-1-P-Ser.

It localises to the spore wall. In Dictyostelium discoideum (Social amoeba), this protein is Spore coat protein SP96 (cotA).